A 225-amino-acid chain; its full sequence is UPF0758 protein Sden_0326 (225 aa).

Positions 102-224 constitute an MPN domain; sequence ILTNPDLTRD…IVSFAERGWL (123 aa). Residues His173, His175, and Asp186 each coordinate Zn(2+). Positions 173–186 match the JAMM motif motif; that stretch reads HNHPSGIAEPSQAD.

The protein belongs to the UPF0758 family.

This Shewanella denitrificans (strain OS217 / ATCC BAA-1090 / DSM 15013) protein is UPF0758 protein Sden_0326.